We begin with the raw amino-acid sequence, 119 residues long: Holo-[acyl-carrier-protein] synthase (119 aa).

Residues aspartate 8 and glutamate 58 each contribute to the Mg(2+) site.

It belongs to the P-Pant transferase superfamily. AcpS family. Requires Mg(2+) as cofactor.

It is found in the cytoplasm. The catalysed reaction is apo-[ACP] + CoA = holo-[ACP] + adenosine 3',5'-bisphosphate + H(+). Its function is as follows. Transfers the 4'-phosphopantetheine moiety from coenzyme A to a Ser of acyl-carrier-protein. In Streptococcus mutans serotype c (strain ATCC 700610 / UA159), this protein is Holo-[acyl-carrier-protein] synthase.